We begin with the raw amino-acid sequence, 199 residues long: FMN-dependent NADH:quinone oxidoreductase 2 (199 aa).

Residues S10, 16-18 (SVS), and 96-99 (MYNF) contribute to the FMN site.

This sequence belongs to the azoreductase type 1 family. In terms of assembly, homodimer. FMN serves as cofactor.

It carries out the reaction 2 a quinone + NADH + H(+) = 2 a 1,4-benzosemiquinone + NAD(+). The enzyme catalyses N,N-dimethyl-1,4-phenylenediamine + anthranilate + 2 NAD(+) = 2-(4-dimethylaminophenyl)diazenylbenzoate + 2 NADH + 2 H(+). Quinone reductase that provides resistance to thiol-specific stress caused by electrophilic quinones. In terms of biological role, also exhibits azoreductase activity. Catalyzes the reductive cleavage of the azo bond in aromatic azo compounds to the corresponding amines. The chain is FMN-dependent NADH:quinone oxidoreductase 2 from Pseudomonas fluorescens (strain ATCC BAA-477 / NRRL B-23932 / Pf-5).